We begin with the raw amino-acid sequence, 296 residues long: Cytidine deaminase (296 aa).

CMP/dCMP-type deaminase domains lie at 47-167 (ELNE…FGPS) and 186-296 (DSND…VEPE). 88 to 90 (NIE) provides a ligand contact to substrate. Residue H101 coordinates Zn(2+). Residue E103 is the Proton donor of the active site. 2 residues coordinate Zn(2+): C128 and C131.

The protein belongs to the cytidine and deoxycytidylate deaminase family. In terms of assembly, homodimer. It depends on Zn(2+) as a cofactor.

It catalyses the reaction cytidine + H2O + H(+) = uridine + NH4(+). The enzyme catalyses 2'-deoxycytidine + H2O + H(+) = 2'-deoxyuridine + NH4(+). This enzyme scavenges exogenous and endogenous cytidine and 2'-deoxycytidine for UMP synthesis. This is Cytidine deaminase from Shewanella pealeana (strain ATCC 700345 / ANG-SQ1).